We begin with the raw amino-acid sequence, 130 residues long: Small ribosomal subunit protein uS9 (130 aa).

Belongs to the universal ribosomal protein uS9 family.

The chain is Small ribosomal subunit protein uS9 from Phytoplasma australiense.